The primary structure comprises 1014 residues: MADRLIVRGAREHNLKNVSLDLPRDSLIVFTGLSGSGKSSLAFDTIFAEGQRRYVESLSSYARQFLGQMDKPDVDFIEGLSPAVSIDQKSTSRNPRSTVGTITEVYDYLRLLFARIGKPHCPECGRPISRQSPQAIVDKVLELPEGSRFQVLSPLVRERKGEFVDLFADLQTKGYSRARVDGETVQLSNPPTLKKQEKHTIEVVVDRLTVKDSAKRRLTDSVETALGLSGGMVVLDFVDLPEDDPERERMYSEHLYCPYDDLSFEELEPRSFSFNSPFGACPDCSGIGTRMEVDAELIVPDEDKSLDEGAIHPWSHGHTKDYFGRLIGALADALGFRTDIPFAGLPLRARKALLYGHKTQVEVRYRNRYGRERRYTTAFEGAIPFVKRRHSEAESDASRERFEGYMREVPCPTCQGTRLKPLVLAVTVMGKSIAEVSAMSISDCADFLGELTLNARDKKIAERVLKEVNERLRFLVDVGLDYLSLNRAAGTLSGGEAQRIRLATQIGSGLVGVLYVLDEPSIGLHQRDNHRLIETLVRLRDMGNTLIVVEHDEDTIKVADWIVDIGPGAGEHGGKVVHSGSVKELLDNAESQTGLYLSGRKAIPLPDIRRPQDPSRRLTVHGARENNLQDIDVSFPLGVFTAVTGVSGSGKSTLVNDILYTHLARELNGARNVPGRHTRVDGDDLVDKVVHVDQSPIGRTPRSNPATYTGVFDHIRKLFAETTEAKVRGYLPGRFSFNVKGGRCENCAGDGTIKIEMNFLPDVYVPCEVCHGARYNRETLEVHYKGKSIADVLNMPIEEATDFFEAVPAISRHMKTLKDVGLGYVRLGQSATTLSGGEAQRVKLASELQRRSTGRTVYVLDEPTTGLHFEDISKLLTVLGGLVDKGNTVIVIEHNLDVIKTADWVVDMGPEGGAGGGLVVAEGTPEQVAGVPASHTGKFLRDVLGADRVSDAAPVTRPRKAAKTVAAKAAAKKTATKTVTGTAAKKATATRTAKTAVKKAAKPAAKKTTRTSKA.

An ATP-binding site is contributed by 32–39 (GLSGSGKS). ABC transporter domains follow at residues 314 to 592 (WSHG…AESQ) and 612 to 941 (QDPS…KFLR). Position 645–652 (645–652 (GVSGSGKS)) interacts with ATP. A C4-type zinc finger spans residues 744–770 (CENCAGDGTIKIEMNFLPDVYVPCEVC). Positions 976–995 (TKTVTGTAAKKATATRTAKT) are enriched in low complexity. Positions 976–1014 (TKTVTGTAAKKATATRTAKTAVKKAAKPAAKKTTRTSKA) are disordered. Basic residues predominate over residues 996–1014 (AVKKAAKPAAKKTTRTSKA).

The protein belongs to the ABC transporter superfamily. UvrA family. In terms of assembly, forms a heterotetramer with UvrB during the search for lesions.

Its subcellular location is the cytoplasm. In terms of biological role, the UvrABC repair system catalyzes the recognition and processing of DNA lesions. UvrA is an ATPase and a DNA-binding protein. A damage recognition complex composed of 2 UvrA and 2 UvrB subunits scans DNA for abnormalities. When the presence of a lesion has been verified by UvrB, the UvrA molecules dissociate. The chain is UvrABC system protein A from Streptomyces coelicolor (strain ATCC BAA-471 / A3(2) / M145).